Here is an 816-residue protein sequence, read N- to C-terminus: Neuroligin-4, Y-linked (816 aa).

A signal peptide spans 1–43 (MLRPQGLLWLPLLFTSVCVMLNSNVLLWITALAIKFTLIDSQA). Residues 44–676 (QYPVVNTNYG…TKRDYSTELS (633 aa)) lie on the Extracellular side of the membrane. Asparagine 102 carries N-linked (GlcNAc...) asparagine glycosylation. 2 disulfides stabilise this stretch: cysteine 110/cysteine 146 and cysteine 306/cysteine 317. An interaction with NRXN1 region spans residues 359–364 (QGEFLN). The cysteines at positions 476 and 510 are disulfide-linked. An N-linked (GlcNAc...) asparagine glycan is attached at asparagine 511. A disordered region spans residues 636–659 (TKRPAITPANNPKHSKDPHKTGPE). Over residues 649–658 (HSKDPHKTGP) the composition is skewed to basic and acidic residues. Residues 677–697 (VTIAVGASLLFLNILAFAALY) form a helical membrane-spanning segment. Residues 698–816 (YKKDKRRHET…LPHGHSTTRV (119 aa)) are Cytoplasmic-facing. At serine 712 the chain carries Phosphoserine.

This sequence belongs to the type-B carboxylesterase/lipase family. In terms of assembly, homodimer. Interacts with NRXN1 in a calcium-dependent manner. Interaction with neurexins is mediated by heparan sulfate glycan modification on neurexin. Interacts through its C-terminus with DLG4/PSD-95 third PDZ domain. As to expression, expressed in fetal and adult brain, prostate and testis.

The protein localises to the cell membrane. It is found in the postsynaptic density membrane. Its function is as follows. Cell surface protein involved in cell-cell-interactions via its interactions with neurexin family members. The polypeptide is Neuroligin-4, Y-linked (NLGN4Y) (Homo sapiens (Human)).